The following is a 668-amino-acid chain: Penicillin-binding protein 3 (668 aa).

Residues 7–23 (LLVFLCVGLIGLIGCSK) form a helical membrane-spanning segment. The active-site Acyl-ester intermediate is the Ser-410.

This sequence belongs to the transpeptidase family.

It is found in the cell membrane. Its subcellular location is the forespore inner membrane. It localises to the forespore outer membrane. The protein resides in the membrane raft. The catalysed reaction is Preferential cleavage: (Ac)2-L-Lys-D-Ala-|-D-Ala. Also transpeptidation of peptidyl-alanyl moieties that are N-acyl substituents of D-alanine.. It participates in cell wall biogenesis; peptidoglycan biosynthesis. Functionally, penicillin-binding proteins (PBPs) function in the late steps of murein biosynthesis. Probably required for both cortical and vegetative peptidoglycan synthesis. Although not usually required for cell division, in the absence of PBP 2B (pbpB) it becomes essential. Confers resistance to oxacillin and cephalexin. The protein is Penicillin-binding protein 3 of Bacillus subtilis (strain 168).